Consider the following 337-residue polypeptide: UDP-3-O-acylglucosamine N-acyltransferase (337 aa).

Histidine 238 (proton acceptor) is an active-site residue.

It belongs to the transferase hexapeptide repeat family. LpxD subfamily. As to quaternary structure, homotrimer.

The catalysed reaction is a UDP-3-O-[(3R)-3-hydroxyacyl]-alpha-D-glucosamine + a (3R)-hydroxyacyl-[ACP] = a UDP-2-N,3-O-bis[(3R)-3-hydroxyacyl]-alpha-D-glucosamine + holo-[ACP] + H(+). It participates in bacterial outer membrane biogenesis; LPS lipid A biosynthesis. Catalyzes the N-acylation of UDP-3-O-acylglucosamine using 3-hydroxyacyl-ACP as the acyl donor. Is involved in the biosynthesis of lipid A, a phosphorylated glycolipid that anchors the lipopolysaccharide to the outer membrane of the cell. The sequence is that of UDP-3-O-acylglucosamine N-acyltransferase from Xanthomonas euvesicatoria pv. vesicatoria (strain 85-10) (Xanthomonas campestris pv. vesicatoria).